We begin with the raw amino-acid sequence, 211 residues long: DNA dC-&gt;dU-editing enzyme APOBEC-3H (211 aa).

The 123-residue stretch at 4-126 folds into the CMP/dCMP-type deaminase domain; the sequence is LTAKTFSLQF…RRQQEGLRLL (123 aa). His-54 serves as a coordination point for Zn(2+). Catalysis depends on Glu-56, which acts as the Proton donor. The Zn(2+) site is built by Cys-85 and Cys-88.

This sequence belongs to the cytidine and deoxycytidylate deaminase family. As to quaternary structure, homodimer. The cofactor is Zn(2+).

It localises to the cytoplasm. The enzyme catalyses a 2'-deoxycytidine in single-stranded DNA + H2O + H(+) = a 2'-deoxyuridine in single-stranded DNA + NH4(+). Its function is as follows. DNA deaminase (cytidine deaminase) which may act as an inhibitor of retrovirus replication and retrotransposon mobility via deaminase-dependent and -independent mechanisms. In Pongo pygmaeus (Bornean orangutan), this protein is DNA dC-&gt;dU-editing enzyme APOBEC-3H.